We begin with the raw amino-acid sequence, 475 residues long: Ribulose bisphosphate carboxylase large chain (475 aa).

N123 and T173 together coordinate substrate. Catalysis depends on K175, which acts as the Proton acceptor. K177 contacts substrate. Mg(2+) contacts are provided by K201, D203, and E204. K201 is subject to N6-carboxylysine. H294 acts as the Proton acceptor in catalysis. Substrate contacts are provided by R295, H327, and S379.

It belongs to the RuBisCO large chain family. Type I subfamily. Heterohexadecamer of 8 large chains and 8 small chains. Mg(2+) serves as cofactor.

The protein resides in the plastid. Its subcellular location is the cyanelle. It catalyses the reaction 2 (2R)-3-phosphoglycerate + 2 H(+) = D-ribulose 1,5-bisphosphate + CO2 + H2O. The enzyme catalyses D-ribulose 1,5-bisphosphate + O2 = 2-phosphoglycolate + (2R)-3-phosphoglycerate + 2 H(+). RuBisCO catalyzes two reactions: the carboxylation of D-ribulose 1,5-bisphosphate, the primary event in carbon dioxide fixation, as well as the oxidative fragmentation of the pentose substrate in the photorespiration process. Both reactions occur simultaneously and in competition at the same active site. The sequence is that of Ribulose bisphosphate carboxylase large chain from Cyanophora paradoxa.